A 139-amino-acid polypeptide reads, in one-letter code: Cystatin (139 aa).

An N-terminal signal peptide occupies residues 1–23; that stretch reads MAGARGCVVLLAAALMLVGAVLG. Positions 76–80 match the Secondary area of contact motif; sequence QLVSG. Cystine bridges form between C94/C104 and C118/C138. S103 carries the phosphoserine modification.

This sequence belongs to the cystatin family.

The protein resides in the secreted. This protein binds tightly to and inhibits a variety of thiol proteases including ficin, papain, and cathepsins B, C, H, and L. Although isolated from egg white, it is also present in serum. The chain is Cystatin from Gallus gallus (Chicken).